Reading from the N-terminus, the 847-residue chain is Mitogen-activated protein kinase kinase kinase 11 (847 aa).

Ser11 carries the post-translational modification Phosphoserine. A disordered region spans residues 11-38 (SPLGSWNGSGSGGGGGGGGGRPEGSPKA). A compositionally biased stretch (gly residues) spans 17 to 32 (NGSGSGGGGGGGGGRP). Residue Ser35 is modified to Phosphoserine. The SH3 domain maps to 41–105 (YANPVWTALF…PSNYVSRGGG (65 aa)). The Protein kinase domain maps to 117–379 (LRLEEVIGIG…ASILQQLEAL (263 aa)). Residues 123–131 (IGIGGFGKV) and Lys144 contribute to the ATP site. Asp241 functions as the Proton acceptor in the catalytic mechanism. Residue Thr277 is modified to Phosphothreonine; by autocatalysis. At Ser281 the chain carries Phosphoserine; by autocatalysis and MAP4K1. A Phosphoserine modification is found at Ser394. Leucine-zipper regions lie at residues 403-424 (IQGLFDELRAKEKELLSREEEL) and 438-459 (LRRREHLLAQWELEVFERELTL). Ser507, Ser524, Ser548, Ser555, and Ser556 each carry phosphoserine. Residues 537–643 (PAEPGQAWGR…SSGTPKLIQR (107 aa)) form a disordered region. Over residues 550 to 562 (RRLEDSSNGERRA) the composition is skewed to basic and acidic residues. Positions 597-609 (SSPLGSPSTPPAL) are enriched in low complexity. Residues Ser654, Ser693, and Ser705 each carry the phosphoserine modification. The interval 655–847 (LGLGRDLQPP…QAPWVPEAGP (193 aa)) is disordered. Residues 676 to 694 (TTPPTPTPAPCPTEPPPSP) are compositionally biased toward pro residues. A Phosphothreonine modification is found at Thr708. Ser724, Ser727, Ser740, Ser748, Ser758, Ser770, Ser789, Ser793, and Ser815 each carry phosphoserine. Positions 760–773 (PLGLISRPRPSPLR) are enriched in low complexity. Residues 787–799 (RPSPLPSPQPAPR) show a composition bias toward pro residues. Residues 800–816 (RAPWTLFPDSDPFWDSP) show a composition bias toward low complexity.

The protein belongs to the protein kinase superfamily. STE Ser/Thr protein kinase family. MAP kinase kinase kinase subfamily. Homodimer; undergoes dimerization during activation. Interacts with MAP2K4/MKK4. Interacts with MAP2K7/MKK7. Found in a complex with SH3RF1, RAC1, MAP2K7/MKK7, MAPK8IP1/JIP1 and MAPK8/JNK1. It depends on Mg(2+) as a cofactor. Autophosphorylation on serine and threonine residues within the activation loop plays a role in enzyme activation. Thr-277 is likely to be the main autophosphorylation site. Phosphorylation of Ser-555 and Ser-556 is induced by CDC42. Expressed in a wide variety of normal and neoplastic tissues including fetal lung, liver, heart and kidney, and adult lung, liver, heart, kidney, placenta, skeletal muscle, pancreas and brain.

The protein resides in the cytoplasm. It localises to the cytoskeleton. The protein localises to the microtubule organizing center. Its subcellular location is the centrosome. The enzyme catalyses L-seryl-[protein] + ATP = O-phospho-L-seryl-[protein] + ADP + H(+). It catalyses the reaction L-threonyl-[protein] + ATP = O-phospho-L-threonyl-[protein] + ADP + H(+). With respect to regulation, homodimerization via the leucine zipper domains is required for autophosphorylation and subsequent activation. Functionally, activates the JUN N-terminal pathway. Required for serum-stimulated cell proliferation and for mitogen and cytokine activation of MAPK14 (p38), MAPK3 (ERK) and MAPK8 (JNK1) through phosphorylation and activation of MAP2K4/MKK4 and MAP2K7/MKK7. Plays a role in mitogen-stimulated phosphorylation and activation of BRAF, but does not phosphorylate BRAF directly. Influences microtubule organization during the cell cycle. This is Mitogen-activated protein kinase kinase kinase 11 from Homo sapiens (Human).